A 776-amino-acid polypeptide reads, in one-letter code: MTTIHTLGYPRIGAQRELKFALESFWKGASTEADLRDTGRALRERHWNAQRDAGLDFVTVGDFAWYDQVLQTAALLGALPTRYGFDPAQLTLAQSFVLARGNADHAAMEMTKWFDTNYHYLVPELTPDLRFGPGTGWLFDEVREAQAAGHRVKVALLGPVTFLHLAKARGGLADKLSLLPQLLPAYAAVLKRLAAEGVEWVQIDEPALVLDLPQAWSDAYGPAYATLAAAGGPRLLLATYFEAASHHAALIRSLPVAGVHLDLVRAPQQLEAFAPWPADKVLSAGVVDGRNIWRTDLEQALARVAPLAQTLGERLWLAPSCSLLHVPVDLAAETRLDDELKGWLAFARQKLDELAVLKRAVIDGRDAAHAALAGSAAAIASRAASRRVHNDSVKKRAAAIRAQDAERAAPYPVRAAAQQARLNLPLLPTTTIGSFPQTAEIRQARAQYKRGELQALTYLERMRAEIADVVQRQEALGLDMLVHGEAERNDMVEYFGELLWGYAFTANGWVQSYGSRCVKPPVIYGDVYRPEPMTVEWSRYAQSLTAKPMKGMLTGPVTMLQWSFVRDDQPREQTALQIALALRDEVRDLEAAGIAAIQIDEPAFREGLPLRAGDVAVYLEWAARVFRVSASGVRNDTQIHTHMCYSEFNDILPAIASMDADVITIETSRSNMELLDAFGEFAYPNEIGPGVYDIHSPRVPRVEEMEALLDKAAQVVPVQRLWVNPDCGLKTRGWPEVEAALRGMVEATRRLRARHAGAVHAGTPATRAEHAESALA.

Residues 16–19 (RELK) and K112 contribute to the 5-methyltetrahydropteroyltri-L-glutamate site. Residues 432–434 (IGS) and E485 contribute to the L-homocysteine site. L-methionine is bound by residues 432–434 (IGS) and E485. 5-methyltetrahydropteroyltri-L-glutamate is bound by residues 516–517 (RC) and W562. Residue D600 participates in L-homocysteine binding. Residue D600 coordinates L-methionine. A 5-methyltetrahydropteroyltri-L-glutamate-binding site is contributed by E606. Zn(2+)-binding residues include H642, C644, and E666. H695 serves as the catalytic Proton donor. C727 is a Zn(2+) binding site. The segment at 755–776 (HAGAVHAGTPATRAEHAESALA) is disordered. Positions 767–776 (RAEHAESALA) are enriched in basic and acidic residues.

The protein belongs to the vitamin-B12 independent methionine synthase family. It depends on Zn(2+) as a cofactor.

It carries out the reaction 5-methyltetrahydropteroyltri-L-glutamate + L-homocysteine = tetrahydropteroyltri-L-glutamate + L-methionine. It participates in amino-acid biosynthesis; L-methionine biosynthesis via de novo pathway; L-methionine from L-homocysteine (MetE route): step 1/1. Catalyzes the transfer of a methyl group from 5-methyltetrahydrofolate to homocysteine resulting in methionine formation. The polypeptide is 5-methyltetrahydropteroyltriglutamate--homocysteine methyltransferase (Ralstonia nicotianae (strain ATCC BAA-1114 / GMI1000) (Ralstonia solanacearum)).